A 293-amino-acid chain; its full sequence is Mitochondrial inner membrane protease atp23 (293 aa).

The interval 1–51 (MSPAPTTSAGPASSGIPPSSLPTSTVTEDDTKPSSSSSKANDLLPRYLTND) is disordered. Positions 8-22 (SAGPASSGIPPSSLP) are enriched in low complexity. Position 190 (histidine 190) interacts with a divalent metal cation. Glutamate 191 is an active-site residue. Histidine 194 lines the a divalent metal cation pocket.

It belongs to the peptidase M76 family.

The protein resides in the mitochondrion inner membrane. Has a dual role in the assembly of mitochondrial ATPase. Acts as a protease that removes N-terminal residues of mitochondrial ATPase CF(0) subunit 6 at the intermembrane space side. Also involved in the correct assembly of the membrane-embedded ATPase CF(0) particle, probably mediating association of subunit 6 with the subunit 9 ring. The polypeptide is Mitochondrial inner membrane protease atp23 (atp23) (Neurospora crassa (strain ATCC 24698 / 74-OR23-1A / CBS 708.71 / DSM 1257 / FGSC 987)).